The chain runs to 743 residues: POU domain, class 2, transcription factor 1 (743 aa).

The segment covering 1-11 has biased composition (polar residues); sequence MNNPSETSKPS. Disordered stretches follow at residues 1–34, 67–95, 258–283, and 357–381; these read MNNPSETSKPSMESGDGNTGTQTNGLDFQKQPVP, SLNVQSKSNEESGDSQQPSQPSQQPSVQA, ATPIQTLPQSQSTPKRIDTPSLEEPS, and SSDSSLSSPSALNSPGIEGLSRRRK. Low complexity predominate over residues 81-95; it reads SQQPSQPSQQPSVQA. 2 positions are modified to phosphothreonine: Thr-270 and Thr-276. Residues 280-354 form the POU-specific domain; sequence EEPSDLEELE…LLEKWLNDAE (75 aa). Ser-283 is modified (phosphoserine). Residues 357–371 are compositionally biased toward low complexity; the sequence is SSDSSLSSPSALNSP. A DNA-binding region (homeobox) is located at residues 379–438; that stretch reads RRKKRTSIETNIRVALEKSFLENQKPTSEEITMIADQLNMEKEVIRVWFCNRRQKEKRIN. Ser-385 and Ser-448 each carry phosphoserine. Over residues 494–504 the composition is skewed to polar residues; it reads VTGTSDTTSNN. The interval 494–557 is disordered; it reads VTGTSDTTSN…TTSTPLSSPL (64 aa). Residues 505–557 show a composition bias toward low complexity; the sequence is TATVISTAPPASSAVTSPSLSPSPSASASTSEASSASETSTTQTTSTPLSSPL.

It belongs to the POU transcription factor family. Class-2 subfamily. In terms of assembly, interacts with POU2AF1; the interaction increases POU2F1 transactivation activity. Interacts with NR3C1, AR, PGR and HCFC1. (Microbial infection) Associates with the herpes simplex virus VP16-induced complex; binding to HCFC1 activates the viral transcriptional activator VP16 for association with POU2F1, to form a multiprotein-DNA complex responsible for activating transcription of the viral immediate early genes. As to quaternary structure, (Microbial infection) Interacts with human herpesvirus 8 (KSHV) protein RTA/ORF50; this interaction enhances RTA/ORF50-mediated transactivation of several viral promoters including K-bZIP promoter. Phosphorylated by PRKDC. As to expression, ubiquitous. Isoform 2 is lymphocyte-specific.

The protein resides in the nucleus. Functionally, transcription factor that binds to the octamer motif (5'-ATTTGCAT-3') and activates the promoters of the genes for some small nuclear RNAs (snRNA) and of genes such as those for histone H2B and immunoglobulins. Modulates transcription transactivation by NR3C1, AR and PGR. In terms of biological role, (Microbial infection) In case of human herpes simplex virus (HSV) infection, POU2F1 forms a multiprotein-DNA complex with the viral transactivator protein VP16 and HCFC1 thereby enabling the transcription of the viral immediate early genes. The chain is POU domain, class 2, transcription factor 1 (POU2F1) from Homo sapiens (Human).